The following is a 144-amino-acid chain: Putative pre-16S rRNA nuclease (144 aa).

The protein belongs to the YqgF nuclease family.

It is found in the cytoplasm. Its function is as follows. Could be a nuclease involved in processing of the 5'-end of pre-16S rRNA. This Picosynechococcus sp. (strain ATCC 27264 / PCC 7002 / PR-6) (Agmenellum quadruplicatum) protein is Putative pre-16S rRNA nuclease.